The primary structure comprises 399 residues: MSQRQPQSPNQTLISITNDTETSSSAVSNDTTPKGWTGDNSPGIEALCAIYITYAVIISVGILGNAILIKVFFKTKSMQTVPNIFITSLAFGDLLLLLTCVPVDATHYLAEGWLFGKVGCKVLSFIRLTSVGVSVFTLTILSADRYKAVVKPLERQPSNAILKTCAKAGGIWIMAMIFALPEAIFSNVYTFQDPNRNVTFESCNSYPISERLLQEIHSLLCFLVFYIIPLSIISVYYSLIARTLYKSTLNIPTEEQSHARKQIESRKRIAKTVLVLVALFALCWLPNHLLYLYHSFTYESYAEPSDVPFVVTIFSRVLAFSNSCVNPFALYWLSKTFQKHFKAQLCCFKAEQPEPPLGDTPLNNLTVMGRVPATGSAHVSEISVTLFSGSTAKKGEDKV.

The Extracellular segment spans residues 1 to 41 (MSQRQPQSPNQTLISITNDTETSSSAVSNDTTPKGWTGDNS). Asn10, Asn18, and Asn29 each carry an N-linked (GlcNAc...) asparagine glycan. A helical membrane pass occupies residues 42 to 63 (PGIEALCAIYITYAVIISVGIL). The Cytoplasmic segment spans residues 64-82 (GNAILIKVFFKTKSMQTVP). A helical membrane pass occupies residues 83–103 (NIFITSLAFGDLLLLLTCVPV). The Extracellular segment spans residues 104 to 121 (DATHYLAEGWLFGKVGCK). An intrachain disulfide couples Cys120 to Cys203. Residues 122-143 (VLSFIRLTSVGVSVFTLTILSA) form a helical membrane-spanning segment. At 144–163 (DRYKAVVKPLERQPSNAILK) the chain is on the cytoplasmic side. A helical transmembrane segment spans residues 164–184 (TCAKAGGIWIMAMIFALPEAI). Over 185 to 220 (FSNVYTFQDPNRNVTFESCNSYPISERLLQEIHSLL) the chain is Extracellular. A helical transmembrane segment spans residues 221–241 (CFLVFYIIPLSIISVYYSLIA). Over 242-272 (RTLYKSTLNIPTEEQSHARKQIESRKRIAKT) the chain is Cytoplasmic. The chain crosses the membrane as a helical span at residues 273 to 293 (VLVLVALFALCWLPNHLLYLY). Topologically, residues 294–313 (HSFTYESYAEPSDVPFVVTI) are extracellular. The chain crosses the membrane as a helical span at residues 314 to 333 (FSRVLAFSNSCVNPFALYWL). At 334–399 (SKTFQKHFKA…STAKKGEDKV (66 aa)) the chain is on the cytoplasmic side. Residue Cys347 is the site of S-palmitoyl cysteine attachment.

This sequence belongs to the G-protein coupled receptor 1 family. In terms of assembly, interacts with C6orf89.

The protein resides in the cell membrane. Its function is as follows. Role in sperm cell division, maturation, or function. This receptor mediates its action by association with G proteins that activate a phosphatidylinositol-calcium second messenger system. The protein is Bombesin receptor subtype-3 (Brs3) of Rattus norvegicus (Rat).